Reading from the N-terminus, the 188-residue chain is Josephin-2 (188 aa).

The region spanning 11 to 188 (PPTVYHERQR…EEKGSWLRTD (178 aa)) is the Josephin domain. The Nucleophile role is filled by C24. H125 acts as the Proton acceptor in catalysis.

It localises to the cytoplasm. Its subcellular location is the cytosol. The catalysed reaction is Thiol-dependent hydrolysis of ester, thioester, amide, peptide and isopeptide bonds formed by the C-terminal Gly of ubiquitin (a 76-residue protein attached to proteins as an intracellular targeting signal).. Its function is as follows. Cleaves 'Lys-63'-linked poly-ubiquitin chains, and with lesser efficiency 'Lys-48'-linked poly-ubiquitin chains (in vitro). May act as a deubiquitinating enzyme. This Homo sapiens (Human) protein is Josephin-2 (JOSD2).